The following is a 367-amino-acid chain: DNA replication and repair protein RecF (367 aa).

30 to 37 (GSNGSGKT) lines the ATP pocket.

This sequence belongs to the RecF family.

The protein localises to the cytoplasm. Functionally, the RecF protein is involved in DNA metabolism; it is required for DNA replication and normal SOS inducibility. RecF binds preferentially to single-stranded, linear DNA. It also seems to bind ATP. This Pseudomonas putida (strain ATCC 700007 / DSM 6899 / JCM 31910 / BCRC 17059 / LMG 24140 / F1) protein is DNA replication and repair protein RecF.